Reading from the N-terminus, the 249-residue chain is Segregation and condensation protein A (249 aa).

The protein belongs to the ScpA family. As to quaternary structure, component of a cohesin-like complex composed of ScpA, ScpB and the Smc homodimer, in which ScpA and ScpB bind to the head domain of Smc. The presence of the three proteins is required for the association of the complex with DNA.

The protein localises to the cytoplasm. In terms of biological role, participates in chromosomal partition during cell division. May act via the formation of a condensin-like complex containing Smc and ScpB that pull DNA away from mid-cell into both cell halves. The protein is Segregation and condensation protein A of Mycoplasmopsis pulmonis (strain UAB CTIP) (Mycoplasma pulmonis).